A 352-amino-acid polypeptide reads, in one-letter code: B1 bradykinin receptor (352 aa).

Residues 1–41 lie on the Extracellular side of the membrane; the sequence is MAAQTLLELQPSNQSQLSALNTTSCDNAREAWDLLYQVLPI. N-linked (GlcNAc...) asparagine glycosylation is found at Asn-13 and Asn-21. The helical transmembrane segment at 42–62 threads the bilayer; it reads FILTICAFGLLGNLFVLSVFL. The Cytoplasmic segment spans residues 63–72; the sequence is LLRRRLTVAE. The helical transmembrane segment at 73–93 threads the bilayer; that stretch reads IYLVNLAASDLVFVLGLPFWA. Over 94–110 the chain is Extracellular; that stretch reads QNIWNQFNWPFGDLLCR. A disulfide bridge connects residues Cys-109 and Cys-188. The chain crosses the membrane as a helical span at residues 111-131; it reads VVNGVIKANLFISIFLMVAIS. At 132-153 the chain is on the cytoplasmic side; it reads QDRYCVLVHPMASRRRRRRRRA. A helical membrane pass occupies residues 154-174; sequence RATCMVIWAVGALLSTPTFLL. The Extracellular segment spans residues 175-206; sequence RSVSAVQDLNISACILLLPHQAWHVARIVELN. Asn-184 carries N-linked (GlcNAc...) asparagine glycosylation. Residues 207 to 227 form a helical membrane-spanning segment; it reads VLGFLLPLAAIIFFNGHILAS. Topologically, residues 228–250 are cytoplasmic; that stretch reads LRGQGEVSQTRIGGPKDCKTTVL. A helical membrane pass occupies residues 251 to 271; the sequence is ILTLVAAFLVCWAPYHCFAFL. Topologically, residues 272–294 are extracellular; sequence EFLFQVRAVRGCFWEDFIDLGLQ. Residues 295 to 315 form a helical membrane-spanning segment; it reads LANFFAFTNSCLNPVIYVFVG. The Cytoplasmic segment spans residues 316-326; it reads RLFRTKVWELY. Cys-329 carries S-palmitoyl cysteine lipidation.

Belongs to the G-protein coupled receptor 1 family. Bradykinin receptor subfamily. BDKRB1 sub-subfamily.

The protein resides in the cell membrane. This is a receptor for bradykinin. Could be a factor in chronic pain and inflammation. The chain is B1 bradykinin receptor (BDKRB1) from Tupaia minor (Pigmy tree shrew).